A 261-amino-acid chain; its full sequence is Rhomboid-type serine protease 2 (261 aa).

The next 5 membrane-spanning stretches (helical) occupy residues 17–37 (LTAG…VFPI), 58–78 (LYPL…SLFV), 94–114 (ITLN…GMLL), 116–136 (PNVY…YFAV), and 155–175 (LYIP…SSFV). Catalysis depends on Ser124, which acts as the Nucleophile. His177 is a catalytic residue.

It belongs to the peptidase S54 family.

It is found in the golgi apparatus membrane. It localises to the golgi apparatus. The protein resides in the cis-Golgi network membrane. The catalysed reaction is Cleaves type-1 transmembrane domains using a catalytic dyad composed of serine and histidine that are contributed by different transmembrane domains.. Its function is as follows. Probable rhomboid-type serine protease that catalyzes intramembrane proteolysis. This chain is Rhomboid-type serine protease 2 (RBD2), found in Eremothecium gossypii (strain ATCC 10895 / CBS 109.51 / FGSC 9923 / NRRL Y-1056) (Yeast).